Consider the following 492-residue polypeptide: N-succinylglutamate 5-semialdehyde dehydrogenase (492 aa).

220–225 (GSANTG) contacts NAD(+). Residues E243 and C277 contribute to the active site.

It belongs to the aldehyde dehydrogenase family. AstD subfamily.

The catalysed reaction is N-succinyl-L-glutamate 5-semialdehyde + NAD(+) + H2O = N-succinyl-L-glutamate + NADH + 2 H(+). Its pathway is amino-acid degradation; L-arginine degradation via AST pathway; L-glutamate and succinate from L-arginine: step 4/5. In terms of biological role, catalyzes the NAD-dependent reduction of succinylglutamate semialdehyde into succinylglutamate. This Escherichia coli O139:H28 (strain E24377A / ETEC) protein is N-succinylglutamate 5-semialdehyde dehydrogenase.